Reading from the N-terminus, the 583-residue chain is Ras-specific guanine nucleotide-releasing factor RalGPS2 (583 aa).

The 239-residue stretch at 49 to 287 (TPEEYAGQIT…YKLSLKIEPG (239 aa)) folds into the Ras-GEF domain. The tract at residues 283 to 314 (KIEPGTSTPRSAASREDLVGPEVGASPQSGRK) is disordered. Phosphoserine occurs at positions 293, 296, 308, and 311. Positions 324-327 (PQTP) match the PXXP motif. T326 carries the post-translational modification Phosphothreonine. Residues S329 and S343 each carry the phosphoserine modification. T361 is subject to Phosphothreonine. Residues 372-406 (DDSVMEPHAPSRGQAESSTLSSGISIGSSDGSELS) are disordered. S374 is subject to Phosphoserine. The segment covering 387–403 (ESSTLSSGISIGSSDGS) has biased composition (low complexity). At S422 the chain carries Phosphoserine. In terms of domain architecture, PH spans 457-569 (AVTIQGVLRR…WFKHLSAACQ (113 aa)). A required for stimulation of nucleotide exchange by RALA region spans residues 459–583 (TIQGVLRRKT…QVPTNLMTFE (125 aa)).

Interacts with the SH3 domains of GRB2 and PLCG1. Interacts with RALA.

The protein localises to the cytoplasm. It is found in the cell membrane. Functionally, guanine nucleotide exchange factor for the small GTPase RALA. May be involved in cytoskeletal organization. May also be involved in the stimulation of transcription in a Ras-independent fashion. The chain is Ras-specific guanine nucleotide-releasing factor RalGPS2 (RALGPS2) from Homo sapiens (Human).